The following is a 75-amino-acid chain: uncharacterized protein (75 aa).

This is an uncharacterized protein from Bovine papillomavirus type 3.